A 364-amino-acid polypeptide reads, in one-letter code: Putative galactoside 2-alpha-L-fucosyltransferase svh-11 (364 aa).

Over 1-19 the chain is Cytoplasmic; that stretch reads MRLFHFLKFLTINNFSRYC. A helical; Signal-anchor for type II membrane protein transmembrane segment spans residues 20–42; the sequence is LKIVKVHIIWITIICIIYFNWRF. At 43-364 the chain is on the lumenal side; sequence KKLDFMAIPY…SANSFTVVRS (322 aa). Residues Asn-60 and Asn-128 are each glycosylated (N-linked (GlcNAc...) asparagine).

It belongs to the glycosyltransferase 11 family.

It localises to the golgi apparatus. The protein resides in the golgi stack membrane. Mediates the transfer of fucose to the terminal galactose on glycan chains of cell surface glycoproteins and glycolipids. Required for axon regeneration after injury. This is Putative galactoside 2-alpha-L-fucosyltransferase svh-11 from Caenorhabditis elegans.